Consider the following 175-residue polypeptide: Disulfide bond formation protein B 2 (175 aa).

Topologically, residues 1 to 9 are cytoplasmic; that stretch reads MYLARTRFL. The helical transmembrane segment at 10–26 threads the bilayer; that stretch reads FFLASLACASIIGTAFY. Residues 27–44 lie on the Periplasmic side of the membrane; that stretch reads LQQTFGLDPCFLCLIQRA. Cysteine 36 and cysteine 39 are oxidised to a cystine. Residues 45-61 form a helical membrane-spanning segment; it reads AIIACGVLALCAACHAP. Topologically, residues 62-68 are cytoplasmic; the sequence is GPTGMRR. A helical transmembrane segment spans residues 69–85; that stretch reads YSLGFLLIALTGLVTAG. Over 86–142 the chain is Periplasmic; that stretch reads AQVWLQTASADQLIPFITKLEHLLSLLSLDMCIDRLRSDAMFCAEITWTLFGISLPE. The chain crosses the membrane as a helical span at residues 143–161; sequence WSLLAFTGLALLPLYPLFS. Residues 162–175 lie on the Cytoplasmic side of the membrane; it reads EFSHWLATKDRARY.

It belongs to the DsbB family.

It is found in the cell inner membrane. Required for disulfide bond formation in some periplasmic proteins. Acts by oxidizing the DsbA protein. This chain is Disulfide bond formation protein B 2, found in Pseudomonas savastanoi pv. phaseolicola (strain 1448A / Race 6) (Pseudomonas syringae pv. phaseolicola (strain 1448A / Race 6)).